A 207-amino-acid polypeptide reads, in one-letter code: ATP-dependent Clp protease proteolytic subunit (207 aa).

The Nucleophile role is filled by Ser111. Residue His136 is part of the active site.

Belongs to the peptidase S14 family. Fourteen ClpP subunits assemble into 2 heptameric rings which stack back to back to give a disk-like structure with a central cavity, resembling the structure of eukaryotic proteasomes.

The protein resides in the cytoplasm. The enzyme catalyses Hydrolysis of proteins to small peptides in the presence of ATP and magnesium. alpha-casein is the usual test substrate. In the absence of ATP, only oligopeptides shorter than five residues are hydrolyzed (such as succinyl-Leu-Tyr-|-NHMec, and Leu-Tyr-Leu-|-Tyr-Trp, in which cleavage of the -Tyr-|-Leu- and -Tyr-|-Trp bonds also occurs).. In terms of biological role, cleaves peptides in various proteins in a process that requires ATP hydrolysis. Has a chymotrypsin-like activity. Plays a major role in the degradation of misfolded proteins. This chain is ATP-dependent Clp protease proteolytic subunit, found in Pectobacterium atrosepticum (strain SCRI 1043 / ATCC BAA-672) (Erwinia carotovora subsp. atroseptica).